A 422-amino-acid chain; its full sequence is Mitochondrial distribution and morphology protein 12 (422 aa).

In terms of domain architecture, SMP-LTD spans 1–386 (MSFDINWNQL…WPSWICIDMN (386 aa)). Disordered stretches follow at residues 74 to 134 (GATN…HDLG) and 387 to 422 (DDGDDDDDDEVEDSNVSDGDGKDNDGKHGDGPTHEV). Acidic residues-rich tracts occupy residues 109–130 (FDDDDDDDEGVDEDDDDDEYDD) and 387–401 (DDGDDDDDDEVEDSN). Basic and acidic residues predominate over residues 405–422 (GDGKDNDGKHGDGPTHEV).

This sequence belongs to the MDM12 family. As to quaternary structure, component of the ER-mitochondria encounter structure (ERMES) or MDM complex, composed of MMM1, MDM10, MDM12 and MDM34. An MMM1 homodimer associates with one molecule of MDM12 on each side in a pairwise head-to-tail manner, and the SMP-LTD domains of MMM1 and MDM12 generate a continuous hydrophobic tunnel for phospholipid trafficking.

The protein localises to the mitochondrion outer membrane. It is found in the endoplasmic reticulum membrane. Component of the ERMES/MDM complex, which serves as a molecular tether to connect the endoplasmic reticulum (ER) and mitochondria. Components of this complex are involved in the control of mitochondrial shape and protein biogenesis, and function in nonvesicular lipid trafficking between the ER and mitochondria. MDM12 is required for the interaction of the ER-resident membrane protein MMM1 and the outer mitochondrial membrane-resident beta-barrel protein MDM10. The MDM12-MMM1 subcomplex functions in the major beta-barrel assembly pathway that is responsible for biogenesis of all mitochondrial outer membrane beta-barrel proteins, and acts in a late step after the SAM complex. The MDM10-MDM12-MMM1 subcomplex further acts in the TOM40-specific pathway after the action of the MDM12-MMM1 complex. Essential for establishing and maintaining the structure of mitochondria and maintenance of mtDNA nucleoids. In Candida dubliniensis (strain CD36 / ATCC MYA-646 / CBS 7987 / NCPF 3949 / NRRL Y-17841) (Yeast), this protein is Mitochondrial distribution and morphology protein 12.